Here is a 519-residue protein sequence, read N- to C-terminus: Ribonuclease Y 1 (519 aa).

The helical transmembrane segment at 2–22 (IILYIILAIIAIVVGYCAGFF) threads the bilayer. Residues 84-113 (QKQEDRLLQREDSLDRKDNSFEKRENSLER) are disordered. The 86-residue stretch at 209-294 (TITVVSLPND…EMVEKAKKEM (86 aa)) folds into the KH domain. An HD domain is found at 335–428 (VLNHSIEVAN…VAAANSISAA (94 aa)).

The protein belongs to the RNase Y family.

It localises to the cell membrane. Functionally, endoribonuclease that initiates mRNA decay. This is Ribonuclease Y 1 from Pediococcus pentosaceus (strain ATCC 25745 / CCUG 21536 / LMG 10740 / 183-1w).